The sequence spans 201 residues: Holliday junction branch migration complex subunit RuvA (201 aa).

Positions 1-63 are domain I; sequence MYDYIKGIVK…EDNISLFGFQ (63 aa). The interval 64-142 is domain II; the sequence is STEERYLFKK…DVVASEIVYK (79 aa). The flexible linker stretch occupies residues 143-153; sequence AAENDIVTGLS. Residues 153–201 are domain III; the sequence is SPQLEEAVLALEALGYSTRELKKVIPKMAKENDLTSDAYIKLALRLMTK.

The protein belongs to the RuvA family. As to quaternary structure, homotetramer. Forms an RuvA(8)-RuvB(12)-Holliday junction (HJ) complex. HJ DNA is sandwiched between 2 RuvA tetramers; dsDNA enters through RuvA and exits via RuvB. An RuvB hexamer assembles on each DNA strand where it exits the tetramer. Each RuvB hexamer is contacted by two RuvA subunits (via domain III) on 2 adjacent RuvB subunits; this complex drives branch migration. In the full resolvosome a probable DNA-RuvA(4)-RuvB(12)-RuvC(2) complex forms which resolves the HJ.

It localises to the cytoplasm. Its function is as follows. The RuvA-RuvB-RuvC complex processes Holliday junction (HJ) DNA during genetic recombination and DNA repair, while the RuvA-RuvB complex plays an important role in the rescue of blocked DNA replication forks via replication fork reversal (RFR). RuvA specifically binds to HJ cruciform DNA, conferring on it an open structure. The RuvB hexamer acts as an ATP-dependent pump, pulling dsDNA into and through the RuvAB complex. HJ branch migration allows RuvC to scan DNA until it finds its consensus sequence, where it cleaves and resolves the cruciform DNA. This is Holliday junction branch migration complex subunit RuvA from Listeria innocua serovar 6a (strain ATCC BAA-680 / CLIP 11262).